The primary structure comprises 238 residues: Uridylate kinase (238 aa).

ATP is bound at residue 12 to 15 (KLSG). Gly-54 contacts UMP. Residues Gly-55 and Arg-59 each coordinate ATP. Residues Asp-74 and 135 to 142 (TGNPYFTT) each bind UMP. ATP is bound by residues Thr-162, Asn-163, Tyr-168, and Asp-171.

Belongs to the UMP kinase family. Homohexamer.

The protein resides in the cytoplasm. The catalysed reaction is UMP + ATP = UDP + ADP. Its pathway is pyrimidine metabolism; CTP biosynthesis via de novo pathway; UDP from UMP (UMPK route): step 1/1. Its activity is regulated as follows. Inhibited by UTP. Its function is as follows. Catalyzes the reversible phosphorylation of UMP to UDP. In Bradyrhizobium sp. (strain BTAi1 / ATCC BAA-1182), this protein is Uridylate kinase.